The chain runs to 97 residues: Pyrin domain-containing protein 2 (97 aa).

The Pyrin domain occupies 1 to 94 (MASSAELDFN…SGRADEHCVM (94 aa)).

As to quaternary structure, interacts with PYCARD/ASC (via pyrin domain). Interacts with NLRP2 (via pyrin domain). In terms of tissue distribution, predominantly expressed in peripheral blood. Weakly expressed in testis.

It is found in the cytoplasm. It localises to the nucleus. In terms of biological role, may play a role in innate immunity by disrupting the interaction between PYCARD and NLRP3, thereby regulating the NLRP3 inflammasome. May also inhibit NF-kappa-B signaling distally by affecting the nuclear accumulation of RELA. In Homo sapiens (Human), this protein is Pyrin domain-containing protein 2.